A 247-amino-acid chain; its full sequence is Aspartate/glutamate leucyltransferase (247 aa).

This sequence belongs to the R-transferase family. Bpt subfamily.

The protein resides in the cytoplasm. It catalyses the reaction N-terminal L-glutamyl-[protein] + L-leucyl-tRNA(Leu) = N-terminal L-leucyl-L-glutamyl-[protein] + tRNA(Leu) + H(+). The enzyme catalyses N-terminal L-aspartyl-[protein] + L-leucyl-tRNA(Leu) = N-terminal L-leucyl-L-aspartyl-[protein] + tRNA(Leu) + H(+). Its function is as follows. Functions in the N-end rule pathway of protein degradation where it conjugates Leu from its aminoacyl-tRNA to the N-termini of proteins containing an N-terminal aspartate or glutamate. This Dechloromonas aromatica (strain RCB) protein is Aspartate/glutamate leucyltransferase.